The following is a 118-amino-acid chain: Fluoride-specific ion channel FluC 2 (118 aa).

4 consecutive transmembrane segments (helical) span residues 1–21 (MIEA…RFAI), 33–53 (FPIA…YIIG), 55–75 (GVTT…FTTF), and 93–113 (TFLL…FLGM). Residues glycine 70 and threonine 73 each contribute to the Na(+) site.

It belongs to the fluoride channel Fluc/FEX (TC 1.A.43) family.

The protein localises to the cell membrane. The catalysed reaction is fluoride(in) = fluoride(out). With respect to regulation, na(+) is not transported, but it plays an essential structural role and its presence is essential for fluoride channel function. Functionally, fluoride-specific ion channel. Important for reducing fluoride concentration in the cell, thus reducing its toxicity. The protein is Fluoride-specific ion channel FluC 2 of Bacillus cereus (strain ZK / E33L).